We begin with the raw amino-acid sequence, 339 residues long: Dihydroorotase (339 aa).

Zn(2+)-binding residues include His12 and His14. Residues 14–16 (HVR) and Asn40 contribute to the substrate site. Zn(2+) is bound by residues Lys94, His133, His167, and Asp239. Lys94 carries the N6-carboxylysine modification. His133 serves as a coordination point for substrate. Asp239 is an active-site residue. Positions 243 and 255 each coordinate substrate.

The protein belongs to the metallo-dependent hydrolases superfamily. DHOase family. Class II DHOase subfamily. As to quaternary structure, homodimer. Requires Zn(2+) as cofactor.

The enzyme catalyses (S)-dihydroorotate + H2O = N-carbamoyl-L-aspartate + H(+). The protein operates within pyrimidine metabolism; UMP biosynthesis via de novo pathway; (S)-dihydroorotate from bicarbonate: step 3/3. In terms of biological role, catalyzes the reversible cyclization of carbamoyl aspartate to dihydroorotate. The polypeptide is Dihydroorotase (Helicobacter pylori (strain ATCC 700392 / 26695) (Campylobacter pylori)).